Reading from the N-terminus, the 197-residue chain is GTP cyclohydrolase 1 (197 aa).

Positions 85, 88, and 156 each coordinate Zn(2+).

It belongs to the GTP cyclohydrolase I family. Toroid-shaped homodecamer, composed of two pentamers of five dimers.

The enzyme catalyses GTP + H2O = 7,8-dihydroneopterin 3'-triphosphate + formate + H(+). The protein operates within cofactor biosynthesis; 7,8-dihydroneopterin triphosphate biosynthesis; 7,8-dihydroneopterin triphosphate from GTP: step 1/1. The protein is GTP cyclohydrolase 1 of Mesorhizobium japonicum (strain LMG 29417 / CECT 9101 / MAFF 303099) (Mesorhizobium loti (strain MAFF 303099)).